A 114-amino-acid chain; its full sequence is Iron-sulfur cluster insertion protein ErpA (114 aa).

The iron-sulfur cluster site is built by cysteine 42, cysteine 106, and cysteine 108.

The protein belongs to the HesB/IscA family. As to quaternary structure, homodimer. The cofactor is iron-sulfur cluster.

Its function is as follows. Required for insertion of 4Fe-4S clusters for at least IspG. The sequence is that of Iron-sulfur cluster insertion protein ErpA from Klebsiella pneumoniae (strain 342).